The sequence spans 408 residues: Probable pectate lyase 5 (408 aa).

The first 27 residues, 1–27 (MRMTLVHLSLSLFSCLLLVLSPTFIAS), serve as a signal peptide directing secretion. Asn45 carries N-linked (GlcNAc...) asparagine glycosylation. Ca(2+)-binding residues include Asp206, Asp230, and Asp234. The active site involves Arg286.

The protein belongs to the polysaccharide lyase 1 family. Requires Ca(2+) as cofactor.

It catalyses the reaction Eliminative cleavage of (1-&gt;4)-alpha-D-galacturonan to give oligosaccharides with 4-deoxy-alpha-D-galact-4-enuronosyl groups at their non-reducing ends.. Its pathway is glycan metabolism; pectin degradation; 2-dehydro-3-deoxy-D-gluconate from pectin: step 2/5. This Arabidopsis thaliana (Mouse-ear cress) protein is Probable pectate lyase 5.